We begin with the raw amino-acid sequence, 519 residues long: DNA damage-binding protein CMR1 (519 aa).

The tract at residues 35–92 (AEAGLGPTGKSRAAASSKPRVKKPAPKKIKQEDIAPRRTSSRLKGIEADSEKAKRKAE) is disordered. The span at 53–62 (PRVKKPAPKK) shows a compositional bias: basic residues. Over residues 78-92 (KGIEADSEKAKRKAE) the composition is skewed to basic and acidic residues. WD repeat units follow at residues 240-280 (PHTR…AVEV), 287-327 (NEDQ…DQAE), 331-371 (LSEK…GKGD), 380-420 (EHES…EWAT), 442-485 (GRWV…LAQL), and 488-519 (DGIT…CLWM).

Belongs to the WD repeat DDB2/WDR76 family.

Functionally, DNA-binding protein that binds to both single- and double-stranded DNA. Binds preferentially to UV-damaged DNA. May be involved in DNA-metabolic processes. The chain is DNA damage-binding protein CMR1 from Phaeosphaeria nodorum (strain SN15 / ATCC MYA-4574 / FGSC 10173) (Glume blotch fungus).